The sequence spans 509 residues: Coiled-coil domain-containing protein 181 (509 aa).

Residues 46–82 (ENINQDLKENETVMEHTKRHSDPDKSLQDEVSPRRND) are compositionally biased toward basic and acidic residues. Disordered regions lie at residues 46-120 (ENIN…EEED) and 241-367 (PINN…EEKE). Polar residues-rich tracts occupy residues 243 to 266 (NNANSTENDPQQLLPRSSNSSVSG) and 300 to 334 (TCPSSAVNSDRSKGNGKSNHRTQSAHISPVTSTYC). Positions 335-375 (LSPRQKELQKQLEEKREKLKREEERRKIEEEKEKKRENDIV) form a coiled coil. Residues 338 to 367 (RQKELQKQLEEKREKLKREEERRKIEEEKE) show a composition bias toward basic and acidic residues.

This sequence belongs to the CCDC181 family. In terms of assembly, homodimer. Interacts with HOOK1. Interacts with HOOK2. Interacts with HOOK3.

It localises to the cytoplasm. It is found in the cytoskeleton. The protein resides in the cell projection. Its subcellular location is the cilium. The protein localises to the flagellum. Its function is as follows. Microtubule-binding protein that localizes to the microtubular manchette of elongating spermatids. The chain is Coiled-coil domain-containing protein 181 from Homo sapiens (Human).